Here is a 739-residue protein sequence, read N- to C-terminus: NAD(P)H-quinone oxidoreductase subunit 5, chloroplastic (739 aa).

16 consecutive transmembrane segments (helical) span residues leucine 9 to phenylalanine 29, tryptophan 40 to isoleucine 60, isoleucine 89 to isoleucine 109, phenylalanine 125 to isoleucine 145, isoleucine 147 to threonine 167, glycine 185 to phenylalanine 205, leucine 224 to phenylalanine 244, threonine 258 to alanine 278, leucine 283 to leucine 303, leucine 327 to isoleucine 347, alanine 354 to serine 374, threonine 396 to serine 416, tryptophan 425 to tyrosine 445, leucine 546 to phenylalanine 566, isoleucine 605 to isoleucine 625, and isoleucine 718 to valine 738.

It belongs to the complex I subunit 5 family. NDH is composed of at least 16 different subunits, 5 of which are encoded in the nucleus.

It localises to the plastid. Its subcellular location is the chloroplast thylakoid membrane. It catalyses the reaction a plastoquinone + NADH + (n+1) H(+)(in) = a plastoquinol + NAD(+) + n H(+)(out). It carries out the reaction a plastoquinone + NADPH + (n+1) H(+)(in) = a plastoquinol + NADP(+) + n H(+)(out). NDH shuttles electrons from NAD(P)H:plastoquinone, via FMN and iron-sulfur (Fe-S) centers, to quinones in the photosynthetic chain and possibly in a chloroplast respiratory chain. The immediate electron acceptor for the enzyme in this species is believed to be plastoquinone. Couples the redox reaction to proton translocation, and thus conserves the redox energy in a proton gradient. The polypeptide is NAD(P)H-quinone oxidoreductase subunit 5, chloroplastic (ndhF) (Buxus microphylla (Littleleaf boxwood)).